A 426-amino-acid chain; its full sequence is Dihydropyrimidine dehydrogenase (NADP(+)), chloroplastic (426 aa).

Residues 1–44 (MASMSFALNRFSGLSSKTTLSADFDPSSRRSFLPPTRVGLKISS) constitute a chloroplast transit peptide. Ala45 is subject to N-acetylalanine. Substrate contacts are provided by residues Asn129 and 188–190 (NFS). Cys191 serves as the catalytic Nucleophile. Position 256–257 (256–257 (NT)) interacts with substrate. The tract at residues 395 to 414 (VEQRKAEKRGLKSDKDWTGD) is disordered.

Belongs to the dihydropyrimidine dehydrogenase family. Expressed in roots, leaves, stems, siliques and flowers. Highly expressed ion dry seeds.

The protein localises to the plastid. Its subcellular location is the chloroplast. It catalyses the reaction 5,6-dihydrouracil + NADP(+) = uracil + NADPH + H(+). It functions in the pathway amino-acid biosynthesis; beta-alanine biosynthesis. Its function is as follows. Involved in pyrimidine base degradation. Catalyzes the reduction of uracil to 5,6-dihydrouracil (DHU) by using NADH as a specific cosubstrate and the reduction of thymine to 5,6-dihydrothymine (DHT). Involved in the recycling of nitrogen from nucleobases to general nitrogen metabolism. This chain is Dihydropyrimidine dehydrogenase (NADP(+)), chloroplastic, found in Arabidopsis thaliana (Mouse-ear cress).